The sequence spans 301 residues: uncharacterized protein (301 aa).

Positions 1–28 are cleaved as a signal peptide; it reads MFFREDKSVAFRLRSAALSGCATGQSDA.

This is an uncharacterized protein from Treponema pallidum (strain Nichols).